The following is a 465-amino-acid chain: Gamma-aminobutyric acid receptor subunit gamma-1 (465 aa).

Positions 1–20 (MGSGKAFLFSPSLLWSQTRG) are cleaved as a signal peptide. Over 21–273 (VRLIFLLLTL…FDLSRRMGYF (253 aa)) the chain is Extracellular. Asn-50 and Asn-127 each carry an N-linked (GlcNAc...) asparagine glycan. A disulfide bridge connects residues Cys-188 and Cys-202. The N-linked (GlcNAc...) asparagine glycan is linked to Asn-245. The helical transmembrane segment at 274–294 (TIQTYIPCILTVVLSWVSFWI) threads the bilayer. The Cytoplasmic portion of the chain corresponds to 295–300 (NKDAVP). Residues 301-320 (ARTSLGITTVLTMTTLSTIA) traverse the membrane as a helical segment. The Extracellular segment spans residues 321 to 328 (RKSLPKVS). A helical membrane pass occupies residues 329–349 (YVTAMDLFVSVCFIFVFAALM). The Cytoplasmic segment spans residues 350-444 (EYGTLHYFTS…RIAKIDSYSR (95 aa)). The helical transmembrane segment at 445 to 465 (IFFPTAFALFNLVYWVGYLYL) threads the bilayer.

It belongs to the ligand-gated ion channel (TC 1.A.9) family. Gamma-aminobutyric acid receptor (TC 1.A.9.5) subfamily. GABRG1 sub-subfamily. In terms of assembly, heteropentamer, formed by a combination of alpha (GABRA1-6), beta (GABRB1-3), gamma (GABRG1-3), delta (GABRD), epsilon (GABRE), rho (GABRR1-3), pi (GABRP) and theta (GABRQ) chains, each subunit exhibiting distinct physiological and pharmacological properties. In terms of processing, may be palmitoylated. As to expression, expressed in brain.

The protein resides in the postsynaptic cell membrane. Its subcellular location is the cell membrane. It catalyses the reaction chloride(in) = chloride(out). Its function is as follows. Gamma subunit of the heteropentameric ligand-gated chloride channel gated by gamma-aminobutyric acid (GABA), a major inhibitory neurotransmitter in the brain. GABA-gated chloride channels, also named GABA(A) receptors (GABAAR), consist of five subunits arranged around a central pore and contain GABA active binding site(s) located at the alpha and beta subunit interface(s). When activated by GABA, GABAARs selectively allow the flow of chloride anions across the cell membrane down their electrochemical gradient. Chloride influx into the postsynaptic neuron following GABAAR opening decreases the neuron ability to generate a new action potential, thereby reducing nerve transmission. In Mus musculus (Mouse), this protein is Gamma-aminobutyric acid receptor subunit gamma-1.